A 281-amino-acid polypeptide reads, in one-letter code: Pantothenate synthetase (281 aa).

Met30–His37 provides a ligand contact to ATP. His37 serves as the catalytic Proton donor. Gln61 lines the (R)-pantoate pocket. Gln61 is a beta-alanine binding site. Residue Gly149–Asp152 coordinates ATP. Gln155 serves as a coordination point for (R)-pantoate. ATP is bound by residues Ile178 and Met186–Arg189.

The protein belongs to the pantothenate synthetase family. In terms of assembly, homodimer.

The protein resides in the cytoplasm. The catalysed reaction is (R)-pantoate + beta-alanine + ATP = (R)-pantothenate + AMP + diphosphate + H(+). It functions in the pathway cofactor biosynthesis; (R)-pantothenate biosynthesis; (R)-pantothenate from (R)-pantoate and beta-alanine: step 1/1. Catalyzes the condensation of pantoate with beta-alanine in an ATP-dependent reaction via a pantoyl-adenylate intermediate. This chain is Pantothenate synthetase, found in Shewanella sp. (strain MR-7).